Consider the following 495-residue polypeptide: Probable aspartic-type endopeptidase OPSB (495 aa).

The first 19 residues, 1–19, serve as a signal peptide directing secretion; sequence MRGDSFIWSLATAIPLLST. Positions 73 to 408 constitute a Peptidase A1 domain; it reads YFCNLTLGTP…DLDNNEISIA (336 aa). Residue Asn76 is glycosylated (N-linked (GlcNAc...) asparagine). The active site involves Asp91. Asn136 carries an N-linked (GlcNAc...) asparagine glycan. The active site involves Asp290. Asn413 carries an N-linked (GlcNAc...) asparagine glycan. The interval 448-470 is disordered; that stretch reads TGLPGVETGVPGSRPPSSKAAGQ. Ala467 carries the GPI-anchor amidated alanine lipid modification. A propeptide spans 468 to 495 (removed in mature form); the sequence is AGQAKRPDFVLGVAAVGLAGAGMLFAAM.

It belongs to the peptidase A1 family.

The protein resides in the cell membrane. Probable GPI-anchored aspartic-type endopeptidase which contributes to virulence. The chain is Probable aspartic-type endopeptidase OPSB (OPSB) from Trichophyton verrucosum (strain HKI 0517).